The following is a 292-amino-acid chain: N-acetylneuraminate lyase (292 aa).

2 residues coordinate aceneuramate: Ser-47 and Thr-48. Tyr-136 acts as the Proton donor in catalysis. Lys-164 acts as the Schiff-base intermediate with substrate in catalysis. Positions 166, 188, 190, 191, and 207 each coordinate aceneuramate.

This sequence belongs to the DapA family. NanA subfamily. As to quaternary structure, homotetramer.

It localises to the cytoplasm. It carries out the reaction aceneuramate = aldehydo-N-acetyl-D-mannosamine + pyruvate. The protein operates within amino-sugar metabolism; N-acetylneuraminate degradation; D-fructose 6-phosphate from N-acetylneuraminate: step 1/5. Catalyzes the reversible aldol cleavage of N-acetylneuraminic acid (sialic acid; Neu5Ac) to form pyruvate and N-acetylmannosamine (ManNAc) via a Schiff base intermediate. The protein is N-acetylneuraminate lyase of Actinobacillus pleuropneumoniae serotype 5b (strain L20).